We begin with the raw amino-acid sequence, 122 residues long: UPF0102 protein cgR_1859 (122 aa).

The protein belongs to the UPF0102 family.

This chain is UPF0102 protein cgR_1859, found in Corynebacterium glutamicum (strain R).